The sequence spans 112 residues: Large ribosomal subunit protein eL33w (112 aa).

The protein belongs to the eukaryotic ribosomal protein eL33 family.

In Arabidopsis thaliana (Mouse-ear cress), this protein is Large ribosomal subunit protein eL33w (RPL35AA).